Consider the following 336-residue polypeptide: tRNA N6-adenosine threonylcarbamoyltransferase (336 aa).

Positions 114 and 118 each coordinate Fe cation. Residues 136 to 140, D169, G182, D186, and N275 each bind substrate; that span reads LVSGG. Residue D301 coordinates Fe cation.

The protein belongs to the KAE1 / TsaD family. Fe(2+) serves as cofactor.

The protein localises to the cytoplasm. The catalysed reaction is L-threonylcarbamoyladenylate + adenosine(37) in tRNA = N(6)-L-threonylcarbamoyladenosine(37) in tRNA + AMP + H(+). Its function is as follows. Required for the formation of a threonylcarbamoyl group on adenosine at position 37 (t(6)A37) in tRNAs that read codons beginning with adenine. Is involved in the transfer of the threonylcarbamoyl moiety of threonylcarbamoyl-AMP (TC-AMP) to the N6 group of A37, together with TsaE and TsaB. TsaD likely plays a direct catalytic role in this reaction. In Streptococcus pneumoniae serotype 19F (strain G54), this protein is tRNA N6-adenosine threonylcarbamoyltransferase.